The following is a 273-amino-acid chain: Chondrolectin (273 aa).

The first 21 residues, 1 to 21, serve as a signal peptide directing secretion; that stretch reads MIRIASLLLGAALLCAQGAFA. Topologically, residues 22–216 are extracellular; it reads RRVVSGQKVC…VVTEAGIIPN (195 aa). The 145-residue stretch at 35–179 folds into the C-type lectin domain; that stretch reads VKHPCYKMAY…CNMKHNYICK (145 aa). 2 disulfide bridges follow: cysteine 61/cysteine 178 and cysteine 144/cysteine 170. Asparagine 86 carries an N-linked (GlcNAc...) asparagine glycan. The chain crosses the membrane as a helical span at residues 217–237; that stretch reads LIYVIIPTIPLLLLILVALGT. The Cytoplasmic portion of the chain corresponds to 238–273; it reads CCFQMLHKSKGRSKTSPNQSTLWISKSTRKESGMEV. The tract at residues 247 to 273 is disordered; that stretch reads KGRSKTSPNQSTLWISKSTRKESGMEV. Positions 251-263 are enriched in polar residues; sequence KTSPNQSTLWISK.

As to quaternary structure, interacts with RABGGTB. In adult mice preferentially expressed in skeletal muscle, testis, brain, and lung. Expressed in striated muscle (at protein level). Expressed in spinal cord. Detected in spinal cord fast motor neurons (at protein level).

The protein resides in the membrane. Its function is as follows. May play a role in the development of the nervous system such as in neurite outgrowth and elongation. May be involved in motor axon growth and guidance. The protein is Chondrolectin (Chodl) of Mus musculus (Mouse).